A 733-amino-acid polypeptide reads, in one-letter code: Ribosomal protein S6 kinase alpha-2 (733 aa).

The Protein kinase 1 domain maps to 59-318; sequence FELLKVLGQG…VEEIKRHPFF (260 aa). ATP contacts are provided by residues 65 to 73 and Lys91; that span reads LGQGSYGKV. Catalysis depends on Asp184, which acts as the Proton acceptor. Position 218 is a phosphoserine; by PDPK1 (Ser218). Residues 319–388 form the AGC-kinase C-terminal domain; sequence VTIDWNKLYR…VASSLVQEPS (70 aa). At Ser377 the chain carries Phosphoserine. Residues 415–672 enclose the Protein kinase 2 domain; the sequence is YEIKEDIGVG…AVQVLKHPWI (258 aa). Residues 421 to 429 and Lys444 contribute to the ATP site; that span reads IGVGSYSVC. Asp532 serves as the catalytic Proton acceptor.

It belongs to the protein kinase superfamily. AGC Ser/Thr protein kinase family. S6 kinase subfamily. As to quaternary structure, forms a complex with either MAPK1/ERK2 or MAPK3/ERK1 in quiescent cells. Transiently dissociates following mitogenic stimulation. Interacts with FBXO5; cooperate to induce the metaphase arrest of early blastomeres; increases and stabilizes interaction of FBXO5 with CDC20. Mg(2+) serves as cofactor. Post-translationally, activated by phosphorylation at Ser-218 by PDPK1. Autophosphorylated on Ser-377, as part of the activation process. May be phosphorylated at Thr-356 and Ser-360 by MAPK1/ERK2 and MAPK3/ERK1. N-terminal myristoylation results in an activated kinase in the absence of added growth factors.

Its subcellular location is the nucleus. It localises to the cytoplasm. It carries out the reaction L-seryl-[protein] + ATP = O-phospho-L-seryl-[protein] + ADP + H(+). It catalyses the reaction L-threonyl-[protein] + ATP = O-phospho-L-threonyl-[protein] + ADP + H(+). With respect to regulation, upon extracellular signal or mitogen stimulation, phosphorylated at Thr-570 in the C-terminal kinase domain (CTKD) by MAPK1/ERK2 and MAPK3/ERK1. The activated CTKD then autophosphorylates Ser-377, allowing binding of PDPK1, which in turn phosphorylates Ser-218 in the N-terminal kinase domain (NTDK) leading to the full activation of the protein and subsequent phosphorylation of the substrates by the NTKD. Functionally, serine/threonine-protein kinase that acts downstream of ERK (MAPK1/ERK2 and MAPK3/ERK1) signaling and mediates mitogenic and stress-induced activation of transcription factors, regulates translation, and mediates cellular proliferation, survival, and differentiation. May function as tumor suppressor in epithelial ovarian cancer cells. This Mus musculus (Mouse) protein is Ribosomal protein S6 kinase alpha-2 (Rps6ka2).